Here is a 64-residue protein sequence, read N- to C-terminus: Large ribosomal subunit protein bL35 (64 aa).

The protein belongs to the bacterial ribosomal protein bL35 family.

The sequence is that of Large ribosomal subunit protein bL35 from Coxiella burnetii (strain RSA 331 / Henzerling II).